An 87-amino-acid chain; its full sequence is Small ribosomal subunit protein bS20 (87 aa).

The segment at 1–24 (MANTAQARKRARQSVERNKHNSSL) is disordered.

It belongs to the bacterial ribosomal protein bS20 family.

Binds directly to 16S ribosomal RNA. This chain is Small ribosomal subunit protein bS20, found in Bordetella avium (strain 197N).